The sequence spans 311 residues: GPN-loop GTPase 2 (311 aa).

20–25 (GSGKTT) contributes to the GTP binding site. The short motif at 77–79 (GPN) is the Gly-Pro-Asn (GPN)-loop; involved in dimer interface element. 179 to 182 (SKMD) lines the GTP pocket.

Belongs to the GPN-loop GTPase family. In terms of assembly, heterodimers with gpn1 or gpn3. Binds to RNA polymerase II (RNAPII).

In terms of biological role, small GTPase required for proper localization of RNA polymerase II and III (RNAPII and RNAPIII). May act at an RNAP assembly step prior to nuclear import. The polypeptide is GPN-loop GTPase 2 (Danio rerio (Zebrafish)).